The primary structure comprises 191 residues: Cytochrome c oxidase assembly protein CtaG (191 aa).

The Cytoplasmic portion of the chain corresponds to 1–9 (MSLSPHQKT). Residues 10–30 (AGGLVLVVAVMGAASFAAVPF) traverse the membrane as a helical; Signal-anchor for type II membrane protein segment. Topologically, residues 31–191 (YNWFCRVTGF…LAAESATDVN (161 aa)) are periplasmic.

Belongs to the COX11/CtaG family.

Its subcellular location is the cell inner membrane. Its function is as follows. Exerts its effect at some terminal stage of cytochrome c oxidase synthesis, probably by being involved in the insertion of the copper B into subunit I. This is Cytochrome c oxidase assembly protein CtaG from Cereibacter sphaeroides (strain ATCC 17029 / ATH 2.4.9) (Rhodobacter sphaeroides).